The sequence spans 91 residues: UPF0358 protein SSP1677 (91 aa).

The protein belongs to the UPF0358 family.

The protein is UPF0358 protein SSP1677 of Staphylococcus saprophyticus subsp. saprophyticus (strain ATCC 15305 / DSM 20229 / NCIMB 8711 / NCTC 7292 / S-41).